Reading from the N-terminus, the 289-residue chain is MSTIIPSPLAPQPPQQHYVTPPLTVILTVILLVFFFIGFFTLYFCKCFLDTMVQAWRLHHGGDTVSDNPLQQPEAPPVNPGLELRIINSFPTFPYSSVKDLREEKYGLECAICLLEFDGDHVLRLLTTCYHVFHQECIDLWFESHRTCPVCRRDLDPPPPPENTKPTVDEMIIDVIQETSDDEEDDHHRQQTTTQIDTWPSSGQTSSIKKEQNLPEKFSRSHSTGHSIVRNKPEEEDKYTLRLPEHVKIKVTRGHSQTESCVTFAELIRNRGYDHRRFGEVSGQTQSKN.

The chain crosses the membrane as a helical span at residues 25–45 (VILTVILLVFFFIGFFTLYFC). The RING-type; atypical zinc-finger motif lies at 110 to 152 (CAICLLEFDGDHVLRLLTTCYHVFHQECIDLWFESHRTCPVCR). The segment at 179 to 237 (TSDDEEDDHHRQQTTTQIDTWPSSGQTSSIKKEQNLPEKFSRSHSTGHSIVRNKPEEED) is disordered. Positions 191–207 (QTTTQIDTWPSSGQTSS) are enriched in polar residues. Positions 208-219 (IKKEQNLPEKFS) are enriched in basic and acidic residues.

The protein belongs to the RING-type zinc finger family. ATL subfamily.

Its subcellular location is the membrane. It catalyses the reaction S-ubiquitinyl-[E2 ubiquitin-conjugating enzyme]-L-cysteine + [acceptor protein]-L-lysine = [E2 ubiquitin-conjugating enzyme]-L-cysteine + N(6)-ubiquitinyl-[acceptor protein]-L-lysine.. It participates in protein modification; protein ubiquitination. The chain is RING-H2 finger protein ATL29 (ATL29) from Arabidopsis thaliana (Mouse-ear cress).